A 492-amino-acid chain; its full sequence is MEKVDIFKDIAERTGGDIYLGVVGAVRTGKSTFIKKFMELVVLPNISNEADRARAQDELPQSAAGKTIMTTEPKFVPNQAMSVHVSDGLDVNIRLVDCVGYTVPGAKGYEDENGPRMINTPWYEEPIPFHEAAEIGTRKVIQEHSTIGVVITTDGTIGDIARSDYIEAEERVIEELKEVGKPFIMVINSVRPYHPETEAMRQDLSEKYDIPVLAMSVESMRESDVLSVLREALYEFPVLEVNVNLPSWVMVLKENHWLRESYQESVKETVKDIKRLRDVDRVVGQFSEFEFIESAGLAGIELGQGVAEIDLYAPDHLYDQILKEVVGVEIRGRDHLLELMQDFAHAKTEYDQVSDALKMVKQTGYGIAAPALADMSLDEPEIIRQGSRFGVRLKAVAPSIHMIKVDVESEFAPIIGTEKQSEELVRYLMQDFEDDPLSIWNSDIFGRSLSSIVREGIQAKLSLMPENARYKLKETLERIINEGSGGLIAIIL.

The Walker A motif; involved in ATP-binding and hydrolysis motif lies at glycine 24–serine 31. ATP is bound at residue glycine 24–serine 31.

Polymerizes to self-assemble into static filaments. ATP hydrolysis is required by every subunit for incorporation into the growing polymer by inducing a conformational change that drives polymerization of a nucleotide-free filament. Polymerization requires a critical concentration of the protein and only occurs after it is localized to the surface of the developing spore. Interacts (via extreme C-terminus Gly-486) with SpoVM (via Ile-6). Interacts (via full-length) with SpoVID (via C-terminus 499-575 AA). Interacts with SafA. Seems to be cleaved by the YabG protease.

It localises to the cytoplasm. It carries out the reaction ATP + H2O = ADP + phosphate + H(+). Functionally, ATPase. Has a role at an early stage in the morphogenesis of the spore coat outer layers. Its ATP hydrolysis is required for proper assembly of the spore coat. Forms a basement layer around the outside surface of the forespore and self-assembles irreversibly into higher order structures by binding and hydrolyzing ATP thus creating a durable and stable platform upon which thereafter morphogenesis of the coat can take place. Required for proper localization of spore coat protein CotE and sporulation-specific proteins including SpoVM. The chain is Stage IV sporulation protein A (spoIVA) from Bacillus subtilis (strain 168).